The following is a 588-amino-acid chain: Schlafen family member 12-like (588 aa).

The helical transmembrane segment at 566-586 (IFLFVCLFRFCLFVCWFVCFF) threads the bilayer.

Belongs to the Schlafen family.

It localises to the membrane. The polypeptide is Schlafen family member 12-like (SLFN12L) (Homo sapiens (Human)).